The sequence spans 85 residues: Small integral membrane protein 2 (85 aa).

Residues 21-43 (GHAISILFGFWTSFICDTYIVLA) traverse the membrane as a helical segment. Residues 51 to 85 (SPDVSASSDEPYARIQQSRRQCHAEEDQSQVPEAG) form a disordered region.

It localises to the membrane. In Homo sapiens (Human), this protein is Small integral membrane protein 2 (SMIM2).